Here is a 200-residue protein sequence, read N- to C-terminus: Neutrophil gelatinase-associated lipocalin (200 aa).

The first 20 residues, 1–20 (MALSVMCLGLALLGVLQSQA), serve as a signal peptide directing secretion. Glutamine 21 is subject to Pyrrolidone carboxylic acid. An a carboxymycobactin-binding site is contributed by 72–74 (YST). Residues asparagine 81 and asparagine 85 are each glycosylated (N-linked (GlcNAc...) asparagine). A disulfide bond links cysteine 98 and cysteine 197. Tyrosine 128 contacts enterobactin. A carboxymycobactin is bound by residues lysine 147, lysine 156, and tyrosine 160. Residue lysine 156 coordinates enterobactin.

Belongs to the calycin superfamily. Lipocalin family. As to quaternary structure, monomer. Homodimer; disulfide-linked. Heterodimer; disulfide-linked with MMP9. N-glycosylated. In terms of tissue distribution, expressed in the cortical tubules of the kidney (at protein level). Also expressed in the medullary tubules of the kidney. Detected in lung, spleen, uterus, vagina and epididymis.

It localises to the secreted. The protein localises to the cytoplasmic granule lumen. Its subcellular location is the cytoplasmic vesicle lumen. Functionally, iron-trafficking protein involved in multiple processes such as apoptosis, innate immunity and renal development. Binds iron through association with 2,3-dihydroxybenzoic acid (2,3-DHBA), a siderophore that shares structural similarities with bacterial enterobactin, and delivers or removes iron from the cell, depending on the context. Iron-bound form (holo-24p3) is internalized following binding to the SLC22A17 (24p3R) receptor, leading to release of iron and subsequent increase of intracellular iron concentration. In contrast, association of the iron-free form (apo-24p3) with the SLC22A17 (24p3R) receptor is followed by association with an intracellular siderophore, iron chelation and iron transfer to the extracellular medium, thereby reducing intracellular iron concentration. Involved in apoptosis due to interleukin-3 (IL3) deprivation: iron-loaded form increases intracellular iron concentration without promoting apoptosis, while iron-free form decreases intracellular iron levels, inducing expression of the proapoptotic protein BCL2L11/BIM, resulting in apoptosis. Involved in innate immunity; limits bacterial proliferation by sequestering iron bound to microbial siderophores, such as enterobactin. Can also bind siderophores from M.tuberculosis. This is Neutrophil gelatinase-associated lipocalin (Lcn2) from Mus musculus (Mouse).